A 439-amino-acid polypeptide reads, in one-letter code: Xaa-Pro dipeptidase (439 aa).

Residues Asp244, Asp255, His335, Glu380, and Glu419 each contribute to the Mn(2+) site.

The protein belongs to the peptidase M24B family. Bacterial-type prolidase subfamily. The cofactor is Mn(2+).

The enzyme catalyses Xaa-L-Pro dipeptide + H2O = an L-alpha-amino acid + L-proline. Splits dipeptides with a prolyl residue in the C-terminal position. The chain is Xaa-Pro dipeptidase from Shewanella sp. (strain MR-4).